The sequence spans 542 residues: GPI alpha-1,2-mannosyltransferase 3 (542 aa).

The segment at 1-36 (MESQAADYNPASRNLHGSSGEMKLRRRKSRQYVSAQ) is disordered. The next 8 membrane-spanning stretches (helical) occupy residues 52-72 (LVLF…TSFV), 125-145 (VQFL…VADI), 213-233 (LVAL…PLLF), 244-264 (HLTL…SLII), 304-324 (GFPV…FLAP), 327-347 (LHIL…LGHK), 351-371 (FIYP…AHLK), and 376-396 (AALS…GLVH). N480 carries N-linked (GlcNAc...) asparagine glycosylation.

Belongs to the glycosyltransferase 22 family. PIGB subfamily.

The protein resides in the endoplasmic reticulum membrane. It participates in glycolipid biosynthesis; glycosylphosphatidylinositol-anchor biosynthesis. Functionally, alpha-1,2-mannosyltransferase that catalyzes the transfer of the third mannose, via an alpha-1,2 bond, from a dolichol-phosphate-mannose (Dol-P-Man) to an alpha-D-Man-(1-&gt;6)-2-PEtn-alpha-D-Man-(1-&gt;4)-alpha-D-GlcN-(1-&gt;6)-(1-radyl,2-acyl-sn-glycero-3-phospho)-2-acyl-inositol intermediate to generate an alpha-D-Man-(1-&gt;2)-alpha-D-Man-(1-&gt;6)-2-PEtn-alpha-D-Man-(1-&gt;4)-alpha-D-GlcN-(1-&gt;6)-(1-radyl,2-acyl-sn-glycero-3-phospho)-2-acyl-inositol (also termed H6) and participates in the nineth step of the glycosylphosphatidylinositol-anchor biosynthesis. May also add the third mannose to an alpha-D-Man-(1-&gt;6)-alpha-D-Man-(1-&gt;4)-alpha-D-GlcN-(1-&gt;6)-(1-radyl,2-acyl-sn-glycero-3-phospho)-2-acyl-inositol (also termed H3) intermediate generating an alpha-D-Man-(1-&gt;2)-alpha-D-Man-(1-&gt;6)-alpha-D-Man-(1-&gt;4)-alpha-D-GlcN-(1-&gt;6)-(1-radyl,2-acyl-sn-glycero-3-phospho)-2-acyl-inositol (also termed H4). This Mus musculus (Mouse) protein is GPI alpha-1,2-mannosyltransferase 3.